A 759-amino-acid chain; its full sequence is Phosphoribosylformylglycinamidine synthase subunit PurL (759 aa).

Residue H61 is part of the active site. Residues Y64 and K105 each coordinate ATP. Residue E107 participates in Mg(2+) binding. Residues 108 to 111 and R130 contribute to the substrate site; that span reads SHNH. The Proton acceptor role is filled by H109. Residue D131 participates in Mg(2+) binding. Q260 is a binding site for substrate. A Mg(2+)-binding site is contributed by D288. 332–334 is a substrate binding site; the sequence is ESQ. ATP contacts are provided by D520 and G557. N558 contacts Mg(2+). S560 contacts substrate.

The protein belongs to the FGAMS family. Monomer. Part of the FGAM synthase complex composed of 1 PurL, 1 PurQ and 2 PurS subunits.

The protein resides in the cytoplasm. It carries out the reaction N(2)-formyl-N(1)-(5-phospho-beta-D-ribosyl)glycinamide + L-glutamine + ATP + H2O = 2-formamido-N(1)-(5-O-phospho-beta-D-ribosyl)acetamidine + L-glutamate + ADP + phosphate + H(+). Its pathway is purine metabolism; IMP biosynthesis via de novo pathway; 5-amino-1-(5-phospho-D-ribosyl)imidazole from N(2)-formyl-N(1)-(5-phospho-D-ribosyl)glycinamide: step 1/2. Part of the phosphoribosylformylglycinamidine synthase complex involved in the purines biosynthetic pathway. Catalyzes the ATP-dependent conversion of formylglycinamide ribonucleotide (FGAR) and glutamine to yield formylglycinamidine ribonucleotide (FGAM) and glutamate. The FGAM synthase complex is composed of three subunits. PurQ produces an ammonia molecule by converting glutamine to glutamate. PurL transfers the ammonia molecule to FGAR to form FGAM in an ATP-dependent manner. PurS interacts with PurQ and PurL and is thought to assist in the transfer of the ammonia molecule from PurQ to PurL. This Thermoplasma volcanium (strain ATCC 51530 / DSM 4299 / JCM 9571 / NBRC 15438 / GSS1) protein is Phosphoribosylformylglycinamidine synthase subunit PurL.